The chain runs to 210 residues: MSTVEAAKPKTEVSPLLKLVLELGPLMVFFFANSRGEWLASRFPVLADLGGPIFIATGLFMAATAAALAVSWMMTRTLPMMPLISGIVVFVFGALTLWLQNDTFIKMKPTIVNTLFGAILLGGLLFGKSLLGYVFHAAFKLDEEGWRKLTVRWGVFFLFLAVLNEVIWRSFSTDFWVAFKVWGTMPITILFTLAQMPLIMKHSVDQENAK.

The next 6 membrane-spanning stretches (helical) occupy residues 12–32, 53–73, 78–98, 115–135, 153–173, and 175–195; these read EVSP…FFFA, IFIA…VSWM, LPMM…LTLW, LFGA…GYVF, WGVF…SFST, and FWVA…TLAQ.

It belongs to the YciB family.

Its subcellular location is the cell inner membrane. Its function is as follows. Plays a role in cell envelope biogenesis, maintenance of cell envelope integrity and membrane homeostasis. The polypeptide is Inner membrane-spanning protein YciB (Sinorhizobium medicae (strain WSM419) (Ensifer medicae)).